Consider the following 636-residue polypeptide: Chaperone protein DnaK (636 aa).

Thr198 carries the post-translational modification Phosphothreonine; by autocatalysis. Residues 598–636 (YAAKEQPGEHGETGSGEQARKESGKDENVVDADFEEVKK) form a disordered region. Over residues 603 to 625 (QPGEHGETGSGEQARKESGKDEN) the composition is skewed to basic and acidic residues. Positions 626–636 (VVDADFEEVKK) are enriched in acidic residues.

It belongs to the heat shock protein 70 family.

In terms of biological role, acts as a chaperone. This is Chaperone protein DnaK from Pelobacter propionicus (strain DSM 2379 / NBRC 103807 / OttBd1).